Consider the following 297-residue polypeptide: Ribonuclease H2 subunit A (297 aa).

Positions 21-248 (PCVLGIDEAG…ASTIVEKRCV (228 aa)) constitute an RNase H type-2 domain. A divalent metal cation is bound by residues Asp27, Glu28, and Asp138.

It belongs to the RNase HII family. Eukaryotic subfamily. Requires Mn(2+) as cofactor. It depends on Mg(2+) as a cofactor.

It catalyses the reaction Endonucleolytic cleavage to 5'-phosphomonoester.. In terms of biological role, catalytic subunit of RNase HII, an endonuclease that specifically degrades the RNA of RNA:DNA hybrids. Participates in DNA replication, possibly by mediating the removal of lagging-strand Okazaki fragment RNA primers during DNA replication. Mediates the excision of single ribonucleotides from DNA:RNA duplexes. The sequence is that of Ribonuclease H2 subunit A (rnh-2) from Caenorhabditis elegans.